Here is a 158-residue protein sequence, read N- to C-terminus: Nascent polypeptide-associated complex subunit beta (158 aa).

Disordered regions lie at residues methionine 1 to leucine 40 and glutamate 119 to glutamate 158. Basic residues predominate over residues glycine 16–lysine 31. The 66-residue stretch at glycine 34–valine 99 folds into the NAC-A/B domain. The segment covering aspartate 137 to asparagine 152 has biased composition (acidic residues).

Belongs to the NAC-beta family. In terms of assembly, part of the nascent polypeptide-associated complex (NAC), consisting of EGD2 and EGD1. NAC associates with ribosomes via EGD1.

It is found in the cytoplasm. It localises to the nucleus. Its function is as follows. Component of the nascent polypeptide-associated complex (NAC), a dynamic component of the ribosomal exit tunnel, protecting the emerging polypeptides from interaction with other cytoplasmic proteins to ensure appropriate nascent protein targeting. The NAC complex also promotes mitochondrial protein import by enhancing productive ribosome interactions with the outer mitochondrial membrane and blocks the inappropriate interaction of ribosomes translating non-secretory nascent polypeptides with translocation sites in the membrane of the endoplasmic reticulum. EGD1 may act as a transcription factor that exert a negative effect on the expression of several genes that are transcribed by RNA polymerase II. The sequence is that of Nascent polypeptide-associated complex subunit beta (EGD1) from Ajellomyces capsulatus (strain NAm1 / WU24) (Darling's disease fungus).